Reading from the N-terminus, the 166-residue chain is Putative 4-hydroxy-4-methyl-2-oxoglutarate aldolase (166 aa).

Residues 81 to 84 (GDII) and Arg103 contribute to the substrate site. Position 104 (Asp104) interacts with a divalent metal cation.

This sequence belongs to the class II aldolase/RraA-like family. Homotrimer. A divalent metal cation is required as a cofactor.

It catalyses the reaction 4-hydroxy-4-methyl-2-oxoglutarate = 2 pyruvate. The enzyme catalyses oxaloacetate + H(+) = pyruvate + CO2. In terms of biological role, catalyzes the aldol cleavage of 4-hydroxy-4-methyl-2-oxoglutarate (HMG) into 2 molecules of pyruvate. Also contains a secondary oxaloacetate (OAA) decarboxylase activity due to the common pyruvate enolate transition state formed following C-C bond cleavage in the retro-aldol and decarboxylation reactions. This is Putative 4-hydroxy-4-methyl-2-oxoglutarate aldolase from Corynebacterium glutamicum (strain ATCC 13032 / DSM 20300 / JCM 1318 / BCRC 11384 / CCUG 27702 / LMG 3730 / NBRC 12168 / NCIMB 10025 / NRRL B-2784 / 534).